The following is a 226-amino-acid chain: UPF0758 protein Sca_1264 (226 aa).

One can recognise an MPN domain in the interval 102-224 (KITSPQDAAD…YLSMVEGGYF (123 aa)). Residues His173, His175, and Asp186 each contribute to the Zn(2+) site. The JAMM motif motif lies at 173–186 (HNHPSGDVTPSKED).

The protein belongs to the UPF0758 family.

This Staphylococcus carnosus (strain TM300) protein is UPF0758 protein Sca_1264.